Consider the following 190-residue polypeptide: Putative manganese efflux pump MntP (190 aa).

6 helical membrane-spanning segments follow: residues 3–23, 41–61, 69–89, 105–125, 133–153, and 168–188; these read PISLLFLALAMSTDAFAAALG, LIFGAIETITPVIGWGIGQVA, DHWIAFTLLLVLGLHMIYNGI, FWILAVTAFATSIDALAVGVG, IVVAALAIGLATTVMVTIGVM, and IIGGIVLIVVGATILYEHLSA.

The protein belongs to the MntP (TC 9.B.29) family.

Its subcellular location is the cell inner membrane. Functionally, probably functions as a manganese efflux pump. This is Putative manganese efflux pump MntP from Pseudomonas syringae pv. syringae (strain B728a).